Consider the following 204-residue polypeptide: Ribonuclease HII (204 aa).

In terms of domain architecture, RNase H type-2 spans 17–204 (TLIAGVDEVG…KPVKKVLGLL (188 aa)). Residues Asp-23, Glu-24, and Asp-115 each coordinate a divalent metal cation.

Belongs to the RNase HII family. Requires Mn(2+) as cofactor. Mg(2+) is required as a cofactor.

The protein localises to the cytoplasm. It carries out the reaction Endonucleolytic cleavage to 5'-phosphomonoester.. Endonuclease that specifically degrades the RNA of RNA-DNA hybrids. This Psychromonas ingrahamii (strain DSM 17664 / CCUG 51855 / 37) protein is Ribonuclease HII.